A 380-amino-acid polypeptide reads, in one-letter code: Ceramide synthase 2 (380 aa).

The Lumenal portion of the chain corresponds to 1-40 (MLQTLYDYFWWERLWLPVNLTWADLEDKDGRVYAKASDLY). A glycan (N-linked (GlcNAc...) asparagine) is linked at N19. A helical membrane pass occupies residues 41-61 (ITLPLALLFLVIRYFFELYVA). The interval 67–128 (LLNVKEKTRL…RRRRNQDRPS (62 aa)) is homeobox-like. The TLC domain occupies 131-332 (KKFREASWRF…ILRMAHKFIT (202 aa)). A run of 4 helical transmembrane segments spans residues 140–160 (FTYY…KPWF), 175–195 (IIPS…SLLF), 209–229 (QIIH…ANYV), and 264–284 (LFIV…PFWI). A Last loop motif motif is present at residues 291–300 (YPLELYPAFF). The chain crosses the membrane as a helical span at residues 304–324 (FFNFMMAVLQMLHIFWAYFIL). Topologically, residues 325-380 (RMAHKFITGKLIEDERSDREETESSEGEETAAGAGAKSRLLANGHPILNNNHPKND) are cytoplasmic. The tract at residues 340-380 (RSDREETESSEGEETAAGAGAKSRLLANGHPILNNNHPKND) is disordered. The residue at position 341 (S341) is a Phosphoserine. Positions 344-353 (EETESSEGEE) are enriched in acidic residues. A Phosphothreonine modification is found at T346. Residues S348 and S349 each carry the phosphoserine modification.

As to quaternary structure, interacts with ATP6V0C, ASGR1, ASGR2 and SLC22A1/OCT1. Interacts with ELOV1, HSD17B12 and TECR. Interacts with NDUFS2. Interacts with PAQR4; the interaction regulates the stability and activity of CERS2 and is inhibited in presence of ceramides. In terms of processing, acetylated. Deacetylation by SIRT3 increases enzyme activity and promotes mitochondrial ceramide accumulation. Phosphorylated at the C-terminus by CK2, leading to increase the ceramide synthase activity. As to expression, broadly expressed, with highest levels in liver and kidney. In brain is detected in neurons, oligodentrocytes, ependymal cells and epithelial cells of the choroid plexus. In kidney is detected in collecting ducts and to a lesser degree in proximal tubules.

Its subcellular location is the endoplasmic reticulum membrane. It carries out the reaction a very long-chain fatty acyl-CoA + a sphingoid base = an N-(very-long-chain fatty acyl)-sphingoid base + CoA + H(+). The catalysed reaction is docosanoyl-CoA + sphinganine = N-docosanoylsphinganine + CoA + H(+). The enzyme catalyses tetracosanoyl-CoA + sphinganine = N-tetracosanoylsphinganine + CoA + H(+). It catalyses the reaction hexacosanoyl-CoA + sphinganine = N-hexacosanoylsphinganine + CoA + H(+). It carries out the reaction (15Z)-tetracosenoyl-CoA + sphinganine = N-(15Z-tetracosenoyl)-sphinganine + CoA + H(+). The catalysed reaction is 2-hydroxytetracosanoyl-CoA + sphinganine = N-(2-hydroxytetracosanoyl)-sphinganine + CoA + H(+). The enzyme catalyses 2-hydroxydocosanoyl-CoA + sphinganine = N-(2-hydroxydocosanoyl)-sphinganine + CoA + H(+). It catalyses the reaction 2-hydroxytetracosenoyl-CoA + sphinganine = N-(2-hydroxytetracosenoyl)-sphinganine + CoA + H(+). It carries out the reaction tetracosenoyl-CoA + sphinganine = an N-tetracosenoylsphinganine + CoA + H(+). The catalysed reaction is hexacosenoyl-CoA + sphinganine = N-hexacosenoylsphinganine + CoA + H(+). The enzyme catalyses tetracosanoyl-CoA + sphing-4-enine = N-tetracosanoyl-sphing-4-enine + CoA + H(+). It catalyses the reaction tetracosenoyl-CoA + sphing-4-enine = N-(tetracosenoyl)-sphing-4-enine + CoA + H(+). It carries out the reaction heptadecasphing-4-enine + tetracosanoyl-CoA = N-tetracosanoyl-heptadecasphing-4-enine + CoA + H(+). The catalysed reaction is a fatty acyl-CoA + sphing-4-enine = an N-acylsphing-4-enine + CoA + H(+). The enzyme catalyses sphing-4-enine + hexadecanoyl-CoA = N-hexadecanoylsphing-4-enine + CoA + H(+). It catalyses the reaction sphing-4-enine + octadecanoyl-CoA = N-octadecanoylsphing-4-enine + CoA + H(+). It carries out the reaction eicosanoyl-CoA + sphing-4-enine = N-eicosanoyl-sphing-4-enine + CoA + H(+). The catalysed reaction is sphinganine + hexadecanoyl-CoA = N-hexadecanoylsphinganine + CoA + H(+). The enzyme catalyses sphinganine + octadecanoyl-CoA = N-(octadecanoyl)-sphinganine + CoA + H(+). It catalyses the reaction sphinganine + (9Z)-octadecenoyl-CoA = N-(9Z-octadecenoyl)-sphinganine + CoA + H(+). It carries out the reaction eicosanoyl-CoA + sphinganine = N-eicosanoylsphinganine + CoA + H(+). Its pathway is lipid metabolism; sphingolipid metabolism. Ceramide synthase activity is inhibited by sphingosine-1-phosphate. Functionally, ceramide synthase that catalyzes the transfer of the acyl chain from acyl-CoA to a sphingoid base, with high selectivity toward very-long-chain fatty acyl-CoA (chain length C22-C27). N-acylates sphinganine and sphingosine bases to form dihydroceramides and ceramides in de novo synthesis and salvage pathways, respectively. Plays a non-redundant role in the synthesis of ceramides with very-long-chain fatty acids in kidney, liver and brain. Regulates the abundance of myelin-specific sphingolipids galactosylceramide and sulfatide that affects myelin sheath architecture and motor neuron functions. The polypeptide is Ceramide synthase 2 (Mus musculus (Mouse)).